The primary structure comprises 278 residues: Protein NIF3 homolog (278 aa).

Belongs to the GTP cyclohydrolase I type 2/NIF3 family.

This is Protein NIF3 homolog from Schizosaccharomyces pombe (strain 972 / ATCC 24843) (Fission yeast).